Reading from the N-terminus, the 207-residue chain is SPRY domain-containing protein 4 (207 aa).

The B30.2/SPRY domain maps to 12–206; it reads CRWGAKRLGV…THSGLEVPEG (195 aa). N6-acetyllysine occurs at positions 53 and 130. Position 139 is an N6-succinyllysine (K139).

This is SPRY domain-containing protein 4 (SPRYD4) from Homo sapiens (Human).